Consider the following 940-residue polypeptide: Isoleucine--tRNA ligase (940 aa).

The short motif at 58-68 is the 'HIGH' region element; sequence PYANGSIHIGH. Glutamate 564 contributes to the L-isoleucyl-5'-AMP binding site. The short motif at 605 to 609 is the 'KMSKS' region element; the sequence is KMSKS. Residue lysine 608 participates in ATP binding. Cysteine 903, cysteine 906, cysteine 923, and cysteine 926 together coordinate Zn(2+).

It belongs to the class-I aminoacyl-tRNA synthetase family. IleS type 1 subfamily. As to quaternary structure, monomer. It depends on Zn(2+) as a cofactor.

It localises to the cytoplasm. The enzyme catalyses tRNA(Ile) + L-isoleucine + ATP = L-isoleucyl-tRNA(Ile) + AMP + diphosphate. In terms of biological role, catalyzes the attachment of isoleucine to tRNA(Ile). As IleRS can inadvertently accommodate and process structurally similar amino acids such as valine, to avoid such errors it has two additional distinct tRNA(Ile)-dependent editing activities. One activity is designated as 'pretransfer' editing and involves the hydrolysis of activated Val-AMP. The other activity is designated 'posttransfer' editing and involves deacylation of mischarged Val-tRNA(Ile). This chain is Isoleucine--tRNA ligase, found in Shewanella sediminis (strain HAW-EB3).